Here is a 377-residue protein sequence, read N- to C-terminus: MRGQWSLLLGPARLCLRLLLLLGYRRRCPPLLRGLVQRWRYGKVCLRSLLYNSFGGSDTAVDAAFEPIYWLVDNVIRWCGVVFVVLVIVLTSSIVAIAYLCVLPLILQTYSVPRLCWHFFYSHWNLILIVFHYYQAITTPPGYPPQGRNDMTTVSICKKCINPKPARTHHCSICNRCVLKMDHHCPWLNNCVGHYNHRYFFSFCFFMTLGCVYCSYGSWDLFREAYAAIEKMKQLDKNKLQAVANQTYHQTPPPTFSFRERVTHKSLVYLWFLCSSVALALGALTIWHAVLISRGETSIERHINKKERQRLQAKGRVFRNHYNYGCLDNWKVFLGVDTGRHWLTRVLLPSSHLPHGNGMSWDPPPWVTAHSASVMAV.

The Cytoplasmic portion of the chain corresponds to M1 to C79. The helical transmembrane segment at G80–L100 threads the bilayer. Over C101–C116 the chain is Lumenal. The helical transmembrane segment at W117–I137 threads the bilayer. Topologically, residues T138–R198 are cytoplasmic. Positions S155–F205 constitute a DHHC domain. Residue C185 is the S-palmitoyl cysteine intermediate of the active site. Residues Y199–W219 traverse the membrane as a helical segment. Residues D220–S266 are Lumenal-facing. A helical membrane pass occupies residues L267–W287. Topologically, residues H288–V377 are cytoplasmic.

Belongs to the DHHC palmitoyltransferase family. In terms of assembly, interacts with ABL1. Interacts with COPS5/JAB1.

The protein resides in the endoplasmic reticulum membrane. The enzyme catalyses L-cysteinyl-[protein] + hexadecanoyl-CoA = S-hexadecanoyl-L-cysteinyl-[protein] + CoA. In terms of biological role, palmitoyl acyltransferase that mediates palmitoylation of proteins such as PLN and ZDHHC6. Required during embryonic heart development and cardiac function, possibly by mediating palmitoylation of PLN, thereby affecting PLN phosphorylation and homooligomerization. Also required for eye development. Palmitoylates ZDHHC6, affecting the quaternary assembly of ZDHHC6, its localization, stability and function. May play a role in DNA damage response. May be involved in apoptosis regulation. Involved in the proliferation of neural stem cells by regulating the FGF/ERK pathway. The protein is Palmitoyltransferase ZDHHC16 of Bos taurus (Bovine).